An 86-amino-acid chain; its full sequence is MSREEGNNGRRPGGKMRRSRKKVCAFCVDKAEFIDYKDINKLRKYVTERGKILPRRISGTCAKHQRELTSSIKRARNIALLPFTTE.

Residues 1–20 are disordered; sequence MSREEGNNGRRPGGKMRRSR.

It belongs to the bacterial ribosomal protein bS18 family. In terms of assembly, part of the 30S ribosomal subunit. Forms a tight heterodimer with protein bS6.

Functionally, binds as a heterodimer with protein bS6 to the central domain of the 16S rRNA, where it helps stabilize the platform of the 30S subunit. In Clostridium beijerinckii (strain ATCC 51743 / NCIMB 8052) (Clostridium acetobutylicum), this protein is Small ribosomal subunit protein bS18.